The primary structure comprises 106 residues: Large ribosomal subunit protein uL24 (106 aa).

This sequence belongs to the universal ribosomal protein uL24 family. As to quaternary structure, part of the 50S ribosomal subunit.

One of two assembly initiator proteins, it binds directly to the 5'-end of the 23S rRNA, where it nucleates assembly of the 50S subunit. Functionally, one of the proteins that surrounds the polypeptide exit tunnel on the outside of the subunit. In Bordetella petrii (strain ATCC BAA-461 / DSM 12804 / CCUG 43448), this protein is Large ribosomal subunit protein uL24.